We begin with the raw amino-acid sequence, 659 residues long: Forkhead box protein P1-B (659 aa).

Composition is skewed to polar residues over residues 1–16 (MMQESGTEAANGTAHQ) and 32–41 (KSTTPSSDIT). 2 disordered regions span residues 1 to 41 (MMQE…SDIT) and 229 to 263 (ENSVTNNGHRGLDLSSPSPVPLKNHNQHGSTNGQY). The C2H2-type zinc-finger motif lies at 289 to 314 (GVCKWPGCEAVFEDFQSFLKHLNNEH). A leucine-zipper region spans residues 331 to 352 (VQQLELQLAKDKERLQAMMTHL). The tract at residues 365–369 (PLNLV) is CTBP1-binding. The disordered stretch occupies residues 379-413 (PAASPPLSLPQTPTTPTAPLTPLSQTHSVITPTSL). Residues 387–404 (LPQTPTTPTAPLTPLSQT) are compositionally biased toward low complexity. The segment at residues 448-538 (RPPFTYASLI…PQKISGSPAL (91 aa)) is a DNA-binding region (fork-head). The disordered stretch occupies residues 590–659 (GAMDHGNSNG…EDDHGTEDML (70 aa)). Over residues 595-605 (GNSNGSDSSPG) the composition is skewed to polar residues. Positions 641–659 (PDFDHHRDYEDDHGTEDML) are enriched in basic and acidic residues.

As to expression, shows complex and dynamic expression during early embryonic development. Prominent in many regions of the developing central nervous system, particularly in midbrain-hindbrain boundary, hindbrain and spinal cord. Strongly expressed in the retina, ear, branchial arches, hatching gland, heart, pronephric duct, gut, proctodeum, pectoral fin and swim bladder.

It is found in the nucleus. Functionally, transcriptional repressor. The sequence is that of Forkhead box protein P1-B (foxp1b) from Danio rerio (Zebrafish).